The primary structure comprises 446 residues: Tubulin beta chain (446 aa).

Gln-11, Glu-69, Ser-138, Gly-142, Thr-143, Gly-144, Asn-204, and Asn-226 together coordinate GTP. Glu-69 serves as a coordination point for Mg(2+). A disordered region spans residues 426–446 (QDATAEEEGEYVEDEDEMDGM). The span at 429-446 (TAEEEGEYVEDEDEMDGM) shows a compositional bias: acidic residues.

This sequence belongs to the tubulin family. Dimer of alpha and beta chains. A typical microtubule is a hollow water-filled tube with an outer diameter of 25 nm and an inner diameter of 15 nM. Alpha-beta heterodimers associate head-to-tail to form protofilaments running lengthwise along the microtubule wall with the beta-tubulin subunit facing the microtubule plus end conferring a structural polarity. Microtubules usually have 13 protofilaments but different protofilament numbers can be found in some organisms and specialized cells. Requires Mg(2+) as cofactor.

It localises to the cytoplasm. The protein resides in the cytoskeleton. Functionally, tubulin is the major constituent of microtubules, a cylinder consisting of laterally associated linear protofilaments composed of alpha- and beta-tubulin heterodimers. Microtubules grow by the addition of GTP-tubulin dimers to the microtubule end, where a stabilizing cap forms. Below the cap, tubulin dimers are in GDP-bound state, owing to GTPase activity of alpha-tubulin. The polypeptide is Tubulin beta chain (Euplotes crassus).